We begin with the raw amino-acid sequence, 210 residues long: Thiamine-phosphate synthase (210 aa).

Residues 34–38 (QLRHK) and N66 each bind 4-amino-2-methyl-5-(diphosphooxymethyl)pyrimidine. Residues D67 and D86 each coordinate Mg(2+). A 4-amino-2-methyl-5-(diphosphooxymethyl)pyrimidine-binding site is contributed by S105. 2-[(2R,5Z)-2-carboxy-4-methylthiazol-5(2H)-ylidene]ethyl phosphate is bound at residue 131-133 (TSS). Residue K134 participates in 4-amino-2-methyl-5-(diphosphooxymethyl)pyrimidine binding. Residue G162 coordinates 2-[(2R,5Z)-2-carboxy-4-methylthiazol-5(2H)-ylidene]ethyl phosphate.

Belongs to the thiamine-phosphate synthase family. Mg(2+) is required as a cofactor.

It catalyses the reaction 2-[(2R,5Z)-2-carboxy-4-methylthiazol-5(2H)-ylidene]ethyl phosphate + 4-amino-2-methyl-5-(diphosphooxymethyl)pyrimidine + 2 H(+) = thiamine phosphate + CO2 + diphosphate. It carries out the reaction 2-(2-carboxy-4-methylthiazol-5-yl)ethyl phosphate + 4-amino-2-methyl-5-(diphosphooxymethyl)pyrimidine + 2 H(+) = thiamine phosphate + CO2 + diphosphate. The catalysed reaction is 4-methyl-5-(2-phosphooxyethyl)-thiazole + 4-amino-2-methyl-5-(diphosphooxymethyl)pyrimidine + H(+) = thiamine phosphate + diphosphate. It functions in the pathway cofactor biosynthesis; thiamine diphosphate biosynthesis; thiamine phosphate from 4-amino-2-methyl-5-diphosphomethylpyrimidine and 4-methyl-5-(2-phosphoethyl)-thiazole: step 1/1. In terms of biological role, condenses 4-methyl-5-(beta-hydroxyethyl)thiazole monophosphate (THZ-P) and 2-methyl-4-amino-5-hydroxymethyl pyrimidine pyrophosphate (HMP-PP) to form thiamine monophosphate (TMP). The chain is Thiamine-phosphate synthase from Chlorobium limicola (strain DSM 245 / NBRC 103803 / 6330).